Here is a 195-residue protein sequence, read N- to C-terminus: dTTP/UTP pyrophosphatase (195 aa).

The active-site Proton acceptor is Asp73.

This sequence belongs to the Maf family. YhdE subfamily. The cofactor is a divalent metal cation.

It is found in the cytoplasm. It carries out the reaction dTTP + H2O = dTMP + diphosphate + H(+). The enzyme catalyses UTP + H2O = UMP + diphosphate + H(+). Its function is as follows. Nucleoside triphosphate pyrophosphatase that hydrolyzes dTTP and UTP. May have a dual role in cell division arrest and in preventing the incorporation of modified nucleotides into cellular nucleic acids. This is dTTP/UTP pyrophosphatase from Desulfotalea psychrophila (strain LSv54 / DSM 12343).